A 342-amino-acid chain; its full sequence is S-adenosylmethionine:tRNA ribosyltransferase-isomerase (342 aa).

Belongs to the QueA family. In terms of assembly, monomer.

Its subcellular location is the cytoplasm. It carries out the reaction 7-aminomethyl-7-carbaguanosine(34) in tRNA + S-adenosyl-L-methionine = epoxyqueuosine(34) in tRNA + adenine + L-methionine + 2 H(+). It functions in the pathway tRNA modification; tRNA-queuosine biosynthesis. Its function is as follows. Transfers and isomerizes the ribose moiety from AdoMet to the 7-aminomethyl group of 7-deazaguanine (preQ1-tRNA) to give epoxyqueuosine (oQ-tRNA). This chain is S-adenosylmethionine:tRNA ribosyltransferase-isomerase, found in Moorella thermoacetica (strain ATCC 39073 / JCM 9320).